A 60-amino-acid chain; its full sequence is UPF0434 protein Ent638_1436 (60 aa).

The protein belongs to the UPF0434 family.

The polypeptide is UPF0434 protein Ent638_1436 (Enterobacter sp. (strain 638)).